Here is a 224-residue protein sequence, read N- to C-terminus: Response regulator protein GraR (224 aa).

Residues 2-115 (QILLVEDDNT…VLIAKLQAIY (114 aa)) form the Response regulatory domain. D51 carries the post-translational modification 4-aspartylphosphate. Residues 126–224 (KRTLTWQDAV…KVGKGYMAHE (99 aa)) constitute a DNA-binding region (ompR/PhoB-type). Residues T128, T130, and T149 each carry the phosphothreonine modification.

As to quaternary structure, interacts with GraX. Post-translationally, phosphorylated by GraS. Phosphorylated by Stk1; phosphorylation increases the DNA-binding activity of GraR.

Its subcellular location is the cytoplasm. Member of the two-component regulatory system GraR/GraS involved in resistance against cationic antimicrobial peptides (CAMPs). Upon phosphorylation by GraS, functions as a transcription regulator by direct binding to promoter regions of target genes such as adhesins, exoproteins, transporters, toxins, and proteins involved in cell wall synthesis. Down-regulates the expression of many genes involved in RNA and amino acid synthesis or glycolysis. This is Response regulator protein GraR (graR) from Staphylococcus aureus (strain MRSA252).